An 859-amino-acid chain; its full sequence is Protein argonaute-2 (859 aa).

Residues 1-27 (MYSGAGPALAPPAPPPPIQGYAFKPPP) are disordered. Tyr2 is subject to 3'-nitrotyrosine. Residues 9-27 (LAPPAPPPPIQGYAFKPPP) are compositionally biased toward pro residues. In terms of domain architecture, PAZ spans 229 to 348 (PVIEFVCEVL…LPLEVCNIVA (120 aa)). Residues 311 to 316 (YFKDRH) are interaction with guide RNA. A Phosphoserine modification is found at Ser387. The Piwi domain occupies 517-818 (LVVVILPGKT…VAFRARYHLV (302 aa)). Positions 524 to 566 (GKTPVYAEVKRVGDTVLGMATQCVQMKNVQRTTPQTLSNLCLK) are interaction with guide RNA. The tract at residues 587 to 590 (FQQP) is interaction with GW182 family members. Asp597 contacts a divalent metal cation. The interval 650–660 (LIQFYKSTRFK) is interaction with GW182 family members. Asp669 is an a divalent metal cation binding site. Pro700 is modified (4-hydroxyproline). Interaction with guide RNA regions lie at residues 709-710 (KR), 753-761 (HAGIQGTSR), and 790-812 (YVRC…VAFR). Residue His807 coordinates a divalent metal cation. Residues Ser824, Ser828, Ser831, and Ser834 each carry the phosphoserine modification.

This sequence belongs to the argonaute family. Ago subfamily. Interacts with DICER1 through its Piwi domain and with TARBP2 during assembly of the RNA-induced silencing complex (RISC). Together, DICER1, AGO2 and TARBP2 constitute the trimeric RISC loading complex (RLC), or micro-RNA (miRNA) loading complex (miRLC). Within the RLC/miRLC, DICER1 and TARBP2 are required to process precursor miRNAs (pre-miRNAs) to mature miRNAs and then load them onto AGO2. AGO2 bound to the mature miRNA constitutes the minimal RISC and may subsequently dissociate from DICER1 and TARBP2. Note however that the term RISC has also been used to describe the trimeric RLC/miRLC. The formation of RISC complexes containing siRNAs rather than miRNAs appears to occur independently of DICER1. Interacts with AGO1. Also interacts with DDB1, DDX5, DDX6, DDX20, DHX30, DHX36, DDX47, DHX9, ELAVL, FXR1, GEMIN4, HNRNPF, IGF2BP1, ILF3, IMP8, MATR3, PABPC1, PRMT5, P4HA1, P4HB, RBM4, SART3, TNRC6A, TNRC6B, UPF1 and YBX1. Interacts with the P-body components DCP1A and XRN1. Associates with polysomes and messenger ribonucleoproteins (mNRPs). Interacts with RBM4; the interaction is modulated under stress-induced conditions, occurs under both cell proliferation and differentiation conditions and in an RNA- and phosphorylation-independent manner. Interacts with LIMD1, WTIP and AJUBA. Interacts with TRIM71; the interaction increases in presence of RNA. Interacts with APOBEC3G in an RNA-dependent manner. Interacts with APOBEC3A, APOBEC3C, APOBEC3F and APOBEC3H. Interacts with DICER1, TARBP2, EIF6, MOV10 and RPL7A (60S ribosome subunit); they form a large RNA-induced silencing complex (RISC). Interacts with FMR1. Interacts with ZFP36. Found in a complex, composed of AGO2, CHD7 and ARB2A. Interacts with RC3H1; the interaction is RNA independent. Interacts with SND1. Interacts with SYT11. Interacts with CLNK. Interacts with GARRE1. Interacts with GRB2; this interaction is important for the formation of a ternary complex containing GRB2, AGO2 and DICER1. In terms of assembly, (Microbial infection) Interacts with Epstein-Barr virus (EBV) tegument protein BGLF2; this interaction participates in the regulation of cellular miRNA by the virus, leading to enhanced SUMOylation. As to quaternary structure, (Microbial infection) Interacts with rotavirus A non-structural protein 5; this interaction probably plays a role in the sequestration of AGO2 in viral factories. (Microbial infection) Interacts with human herpesvirus 8 protein MTA/ORF57; this interaction inhibits P-body formation. Mg(2+) serves as cofactor. It depends on Mn(2+) as a cofactor. Post-translationally, hydroxylated. 4-hydroxylation appears to enhance protein stability but is not required for miRNA-binding or endonuclease activity. Ubiquitinated on surface-exposed lysines by a SCF-like E3 ubiquitin-protein ligase complex containing ZSWIM8 during target-directed microRNA degradation (TDMD), a process that mediates degradation of microRNAs (miRNAs). Ubiquitination by the SCF-like E3 ubiquitin-protein ligase complex containing ZSWIM8 leads to its subsequent degradation, thereby exposing miRNAs for degradation. ZSWIM8 recognizes and binds AGO2 when it is engaged with a TDMD target. In terms of processing, phosphorylated. A phosphorylation cycle of C-terminal serine cluster (Ser-824-Ser-834) regulates the release of target mRNAs. Target-binding leads to phosphorylation of these residues by CSNK1A1, which reduces the affinity of AGO2 for mRNA and enables target release. The ANKRD52-PPP6C phosphatase complex dephosphorylates the residues, which primes AGO2 for binding a new target. Post-translationally, phosphorylation at Ser-387 by AKT3; leads to up-regulate translational repression of microRNA target and down-regulate endonucleolytic cleavage.

The protein resides in the cytoplasm. Its subcellular location is the P-body. It localises to the nucleus. It catalyses the reaction Endonucleolytic cleavage to 5'-phosphomonoester.. Its activity is regulated as follows. Inhibited by EDTA. Required for RNA-mediated gene silencing (RNAi) by the RNA-induced silencing complex (RISC). The 'minimal RISC' appears to include AGO2 bound to a short guide RNA such as a microRNA (miRNA) or short interfering RNA (siRNA). These guide RNAs direct RISC to complementary mRNAs that are targets for RISC-mediated gene silencing. The precise mechanism of gene silencing depends on the degree of complementarity between the miRNA or siRNA and its target. Binding of RISC to a perfectly complementary mRNA generally results in silencing due to endonucleolytic cleavage of the mRNA specifically by AGO2. Binding of RISC to a partially complementary mRNA results in silencing through inhibition of translation, and this is independent of endonuclease activity. May inhibit translation initiation by binding to the 7-methylguanosine cap, thereby preventing the recruitment of the translation initiation factor eIF4-E. May also inhibit translation initiation via interaction with EIF6, which itself binds to the 60S ribosomal subunit and prevents its association with the 40S ribosomal subunit. The inhibition of translational initiation leads to the accumulation of the affected mRNA in cytoplasmic processing bodies (P-bodies), where mRNA degradation may subsequently occur. In some cases RISC-mediated translational repression is also observed for miRNAs that perfectly match the 3' untranslated region (3'-UTR). Can also up-regulate the translation of specific mRNAs under certain growth conditions. Binds to the AU element of the 3'-UTR of the TNF (TNF-alpha) mRNA and up-regulates translation under conditions of serum starvation. Also required for transcriptional gene silencing (TGS), in which short RNAs known as antigene RNAs or agRNAs direct the transcriptional repression of complementary promoter regions. Its function is as follows. (Microbial infection) Upon Sars-CoV-2 infection, associates with viral miRNA-like small RNA, CoV2-miR-O7a, and may repress mRNAs, such as BATF2, to evade the IFN response. The chain is Protein argonaute-2 from Homo sapiens (Human).